Reading from the N-terminus, the 234-residue chain is MKIHVVNNQVEGATVALDILREKLNGGTKVLGLATGSSPLEFYRLIRESDLDFSDVTSVNLDEYVGLGEESDQSYIHFMKENLFNTKPFKQSYLPNGLATDVVAETERYNKILAEHPVDFQILGIGRNGHIGFNEPGAPFDGQTHLVELAPSTIEANARFFDNPEDVPKQAISMGIANIMAAKTIVLMAYGQEKADAIKATVEGAVTEDVPASVLQNHDNVILILDQAAASKLV.

The active-site Proton acceptor; for enolization step is the Asp-62. The active-site For ring-opening step is the Asn-128. His-130 serves as the catalytic Proton acceptor; for ring-opening step. Glu-135 serves as the catalytic For ring-opening step.

The protein belongs to the glucosamine/galactosamine-6-phosphate isomerase family. NagB subfamily.

The catalysed reaction is alpha-D-glucosamine 6-phosphate + H2O = beta-D-fructose 6-phosphate + NH4(+). It participates in amino-sugar metabolism; N-acetylneuraminate degradation; D-fructose 6-phosphate from N-acetylneuraminate: step 5/5. Its function is as follows. Catalyzes the reversible isomerization-deamination of glucosamine 6-phosphate (GlcN6P) to form fructose 6-phosphate (Fru6P) and ammonium ion. The protein is Glucosamine-6-phosphate deaminase of Streptococcus suis (strain 98HAH33).